The primary structure comprises 253 residues: Triosephosphate isomerase (253 aa).

8–10 contributes to the substrate binding site; the sequence is NWK. Residue His93 is the Electrophile of the active site. Glu165 (proton acceptor) is an active-site residue. Substrate-binding positions include Gly171, Ser210, and 231–232; that span reads GG.

This sequence belongs to the triosephosphate isomerase family. In terms of assembly, homodimer.

It is found in the cytoplasm. It catalyses the reaction D-glyceraldehyde 3-phosphate = dihydroxyacetone phosphate. It participates in carbohydrate biosynthesis; gluconeogenesis. It functions in the pathway carbohydrate degradation; glycolysis; D-glyceraldehyde 3-phosphate from glycerone phosphate: step 1/1. In terms of biological role, involved in the gluconeogenesis. Catalyzes stereospecifically the conversion of dihydroxyacetone phosphate (DHAP) to D-glyceraldehyde-3-phosphate (G3P). This is Triosephosphate isomerase from Francisella philomiragia subsp. philomiragia (strain ATCC 25017 / CCUG 19701 / FSC 153 / O#319-036).